A 176-amino-acid polypeptide reads, in one-letter code: Translation initiation factor IF-3 (176 aa).

This sequence belongs to the IF-3 family. In terms of assembly, monomer.

It is found in the cytoplasm. Its function is as follows. IF-3 binds to the 30S ribosomal subunit and shifts the equilibrium between 70S ribosomes and their 50S and 30S subunits in favor of the free subunits, thus enhancing the availability of 30S subunits on which protein synthesis initiation begins. The sequence is that of Translation initiation factor IF-3 from Streptococcus thermophilus (strain ATCC BAA-491 / LMD-9).